Consider the following 210-residue polypeptide: Pyridoxine/pyridoxamine 5'-phosphate oxidase (210 aa).

Substrate contacts are provided by residues Arg-7 to Tyr-10 and Lys-65. FMN is bound by residues Arg-60–Lys-65, Phe-75–Thr-76, Arg-81, Lys-82, and Gln-104. Substrate is bound by residues Tyr-122, Arg-126, and Ser-130. FMN-binding positions include Gln-139–Ser-140 and Trp-183. Substrate is bound at residue Arg-189 to His-191. Residue Arg-193 coordinates FMN.

The protein belongs to the pyridoxamine 5'-phosphate oxidase family. In terms of assembly, homodimer. It depends on FMN as a cofactor.

It catalyses the reaction pyridoxamine 5'-phosphate + O2 + H2O = pyridoxal 5'-phosphate + H2O2 + NH4(+). It carries out the reaction pyridoxine 5'-phosphate + O2 = pyridoxal 5'-phosphate + H2O2. It participates in cofactor metabolism; pyridoxal 5'-phosphate salvage; pyridoxal 5'-phosphate from pyridoxamine 5'-phosphate: step 1/1. The protein operates within cofactor metabolism; pyridoxal 5'-phosphate salvage; pyridoxal 5'-phosphate from pyridoxine 5'-phosphate: step 1/1. Functionally, catalyzes the oxidation of either pyridoxine 5'-phosphate (PNP) or pyridoxamine 5'-phosphate (PMP) into pyridoxal 5'-phosphate (PLP). The sequence is that of Pyridoxine/pyridoxamine 5'-phosphate oxidase from Actinobacillus succinogenes (strain ATCC 55618 / DSM 22257 / CCUG 43843 / 130Z).